Consider the following 510-residue polypeptide: Probable cytosol aminopeptidase (510 aa).

2 residues coordinate Mn(2+): Lys-272 and Asp-277. Residue Lys-284 is part of the active site. The Mn(2+) site is built by Asp-296, Asp-355, and Glu-357. Residue Arg-359 is part of the active site.

This sequence belongs to the peptidase M17 family. Mn(2+) serves as cofactor.

The protein resides in the cytoplasm. The catalysed reaction is Release of an N-terminal amino acid, Xaa-|-Yaa-, in which Xaa is preferably Leu, but may be other amino acids including Pro although not Arg or Lys, and Yaa may be Pro. Amino acid amides and methyl esters are also readily hydrolyzed, but rates on arylamides are exceedingly low.. It catalyses the reaction Release of an N-terminal amino acid, preferentially leucine, but not glutamic or aspartic acids.. Its function is as follows. Presumably involved in the processing and regular turnover of intracellular proteins. Catalyzes the removal of unsubstituted N-terminal amino acids from various peptides. The polypeptide is Probable cytosol aminopeptidase (Synechococcus sp. (strain JA-2-3B'a(2-13)) (Cyanobacteria bacterium Yellowstone B-Prime)).